Here is a 988-residue protein sequence, read N- to C-terminus: DNA polymerase (988 aa).

The protein belongs to the DNA polymerase type-B family. Interacts with A20. Component of the Uracil-DNA glycosylase(UDG)-A20-polymerase complex; A20 and UDG form a heterodimeric processivity factor that associates with E9 to form the processive polymerase holoenzyme.

The catalysed reaction is DNA(n) + a 2'-deoxyribonucleoside 5'-triphosphate = DNA(n+1) + diphosphate. Functionally, catalyzes DNA synthesis. Acquires processivity by associating with a heterodimeric processivity factor comprised of the viral A20 and D4 proteins, thereby forming the DNA polymerase holoenzyme. Displays 3'- to 5' exonuclease activity. Might participate in viral DNA recombination. Does not perform translesion synthesis across an abasic site. This chain is DNA polymerase (POL), found in Vertebrata (FPV).